Reading from the N-terminus, the 758-residue chain is Vitamin K-dependent gamma-carboxylase (758 aa).

The disordered stretch occupies residues 1–31; that stretch reads MAVSARSARSPPDSDKVQKDKAGQTSGRRQG. Residue Ala2 is modified to N-acetylalanine. At 2-60 the chain is on the cytoplasmic side; the sequence is AVSARSARSPPDSDKVQKDKAGQTSGRRQGSRMGKLLGFEWTDVSSWGKLVTLLNRPTD. The segment covering 12-22 has biased composition (basic and acidic residues); the sequence is PDSDKVQKDKA. Residues 61–81 traverse the membrane as a helical segment; it reads PASLAVFRFLFGLMMVLDIPQ. Topologically, residues 82–113 are lumenal; it reads ERGLSSLDRRYLDGLEVCRFPLLDALQPLPLD. Cysteines 99 and 450 form a disulfide. A helical transmembrane segment spans residues 114 to 134; the sequence is WMYLVYTIMFLGALGMMLGLR. Over 135 to 136 the chain is Cytoplasmic; sequence YR. Residues 137 to 157 form a helical membrane-spanning segment; sequence ISCVLFLLPYWYVFLLDKTSW. The Lumenal segment spans residues 158–292; the sequence is NNHSYLYGLL…VSYFHCMNSQ (135 aa). The helical transmembrane segment at 293–313 threads the bilayer; it reads LFSIGMFPYVMLASSPLFCSP. The Cytoplasmic segment spans residues 314–361; it reads EWPRKLVAHCPKRLQELLPLRTAPQPSASCVYKRSRAKGGQKPGLRHR. Residues 362–382 form a helical membrane-spanning segment; it reads LGAAFTLLYLLEQLFLPYSHF. Topologically, residues 383–758 are lumenal; sequence LTQGYNNWTN…PNADAVHSEF (376 aa). The disordered stretch occupies residues 727-758; sequence PFEPVGEPSPSNTDSSNPNPSEPNADAVHSEF. Residues 734 to 750 are compositionally biased toward low complexity; it reads PSPSNTDSSNPNPSEPN.

This sequence belongs to the vitamin K-dependent gamma-carboxylase family. Monomer. May interact with CALU.

It localises to the endoplasmic reticulum membrane. It catalyses the reaction 4-carboxy-L-glutamyl-[protein] + 2,3-epoxyphylloquinone + H2O + H(+) = phylloquinol + L-glutamyl-[protein] + CO2 + O2. Functionally, mediates the vitamin K-dependent carboxylation of glutamate residues to calcium-binding gamma-carboxyglutamate (Gla) residues with the concomitant conversion of the reduced hydroquinone form of vitamin K to vitamin K epoxide. Catalyzes gamma-carboxylation of various proteins, such as blood coagulation factors (F2, F7, F9 and F10), osteocalcin (BGLAP) or matrix Gla protein (MGP). This chain is Vitamin K-dependent gamma-carboxylase (GGCX), found in Delphinapterus leucas (Beluga whale).